Here is a 416-residue protein sequence, read N- to C-terminus: Squalene synthase (416 aa).

Arg52 and Arg77 together coordinate NADP(+). 3 residues coordinate Mg(2+): Asp80, Glu83, and Asp84. Arg218 is an NADP(+) binding site. The helical transmembrane segment at Ser284–Tyr304 threads the bilayer. Positions 315 and 317 each coordinate NADP(+). The chain crosses the membrane as a helical span at residues Pro384–Leu404.

This sequence belongs to the phytoene/squalene synthase family. Mg(2+) is required as a cofactor.

It is found in the endoplasmic reticulum membrane. The enzyme catalyses 2 (2E,6E)-farnesyl diphosphate + NADPH + H(+) = squalene + 2 diphosphate + NADP(+). It catalyses the reaction 2 (2E,6E)-farnesyl diphosphate + NADH + H(+) = squalene + 2 diphosphate + NAD(+). It carries out the reaction presqualene diphosphate + NADH + H(+) = squalene + diphosphate + NAD(+). The catalysed reaction is presqualene diphosphate + NADPH + H(+) = squalene + diphosphate + NADP(+). The enzyme catalyses 2 (2E,6E)-farnesyl diphosphate = presqualene diphosphate + diphosphate. It functions in the pathway terpene metabolism; lanosterol biosynthesis; lanosterol from farnesyl diphosphate: step 1/3. Functionally, catalyzes the condensation of 2 farnesyl pyrophosphate (FPP) moieties to form squalene. Proceeds in two distinct steps. In the first half-reaction, two molecules of FPP react to form the stable presqualene diphosphate intermediate (PSQPP), with concomitant release of a proton and a molecule of inorganic diphosphate. In the second half-reaction, PSQPP undergoes heterolysis, isomerization, and reduction with NADPH or NADH to form squalene. It is the first committed enzyme of the sterol biosynthesis pathway. This Rattus norvegicus (Rat) protein is Squalene synthase (Fdft1).